The following is a 153-amino-acid chain: MSSILIVRIRGSASTPWDLQEVLEMLRLSKQYSAMVYPKQDDIVGMVRKVQSYVTWGELNMDGAKALMARIETVKGALDQSFIEKELGLSTEDFIKKLVDGELKLNSIPSIKLPIRLHPPRKGFKGKINSFIGSGGELGYRGEKINELVRRMV.

It belongs to the universal ribosomal protein uL30 family. As to quaternary structure, part of the 50S ribosomal subunit.

In Metallosphaera sedula (strain ATCC 51363 / DSM 5348 / JCM 9185 / NBRC 15509 / TH2), this protein is Large ribosomal subunit protein uL30.